Reading from the N-terminus, the 269-residue chain is Putative ABC transporter ATP-binding protein PF0528 (269 aa).

In terms of domain architecture, ABC transporter spans 6-237; the sequence is IVVENLYSSY…EILKRNNLDV (232 aa). 39 to 46 serves as a coordination point for ATP; that stretch reads GPNGAGKS.

This sequence belongs to the ABC transporter superfamily.

The protein localises to the cell membrane. Probably part of an ABC transporter complex. Responsible for energy coupling to the transport system. This is Putative ABC transporter ATP-binding protein PF0528 from Pyrococcus furiosus (strain ATCC 43587 / DSM 3638 / JCM 8422 / Vc1).